We begin with the raw amino-acid sequence, 23 residues long: Protein YsaE (23 aa).

The polypeptide is Protein YsaE (Escherichia coli (strain K12)).